The sequence spans 224 residues: Peroxynitrite isomerase 2 (224 aa).

The short motif at 71 to 77 is the GXWXGXG element; that stretch reads GVWRGEG. The heme b site is built by K187 and H214.

This sequence belongs to the nitrobindin family. Homodimer. Requires heme b as cofactor.

The catalysed reaction is peroxynitrite = nitrate. The protein operates within nitrogen metabolism. Heme-binding protein able to scavenge peroxynitrite and to protect free L-tyrosine against peroxynitrite-mediated nitration, by acting as a peroxynitrite isomerase that converts peroxynitrite to nitrate. Therefore, this protein likely plays a role in peroxynitrite sensing and in the detoxification of reactive nitrogen and oxygen species (RNS and ROS, respectively). Is able to bind nitric oxide (NO) in vitro, but may act as a sensor of peroxynitrite levels in vivo. This chain is Peroxynitrite isomerase 2, found in Mycobacterium sp. (strain JLS).